The following is a 376-amino-acid chain: Glutamate 5-kinase (376 aa).

K15 contacts ATP. 3 residues coordinate substrate: S55, D141, and N153. ATP contacts are provided by residues S173–D174 and T215–K221. The PUA domain occupies A280–A361.

Belongs to the glutamate 5-kinase family.

The protein localises to the cytoplasm. It catalyses the reaction L-glutamate + ATP = L-glutamyl 5-phosphate + ADP. It participates in amino-acid biosynthesis; L-proline biosynthesis; L-glutamate 5-semialdehyde from L-glutamate: step 1/2. Its function is as follows. Catalyzes the transfer of a phosphate group to glutamate to form L-glutamate 5-phosphate. The protein is Glutamate 5-kinase of Salinibacter ruber (strain DSM 13855 / M31).